Consider the following 218-residue polypeptide: Non-structural protein NP-1 (218 aa).

Disordered stretches follow at residues methionine 1–proline 89 and threonine 195–asparagine 218. Composition is skewed to basic residues over residues aspartate 8–serine 18 and proline 27–isoleucine 40. A compositionally biased stretch (polar residues) spans serine 58 to lysine 67. The segment covering threonine 73–arginine 86 has biased composition (basic and acidic residues). The span at glutamate 196–methionine 205 shows a compositional bias: acidic residues.

Belongs to the Bocaparvovirus Non-structural protein NP-1 family.

It is found in the host nucleus. Functionally, required for the expression of the capsid proteins. Performs the splicing and internal polyadenylation of the viral capsid-encoding mRNA precursor, which allows its maturation and expression. Transactivates the viral promoter. This is Non-structural protein NP-1 (NP1) from Human bocavirus 3 (HBoV3).